The following is a 225-amino-acid chain: Ribosomal RNA small subunit methyltransferase G (225 aa).

S-adenosyl-L-methionine is bound by residues G71, L76, 121–122 (AE), and R139. Residues 204 to 225 (VVEARRATPSNGRGRPGRSSRR) are disordered.

This sequence belongs to the methyltransferase superfamily. RNA methyltransferase RsmG family.

Its subcellular location is the cytoplasm. Functionally, specifically methylates the N7 position of guanine in position 518 of 16S rRNA. The chain is Ribosomal RNA small subunit methyltransferase G from Mycobacterium sp. (strain JLS).